A 471-amino-acid chain; its full sequence is 7-hydroxymethyl chlorophyll a reductase, chloroplastic (471 aa).

A chloroplast-targeting transit peptide spans 1–44 (MARCISFLSTSSSLPCATKPPCCSVSSVLPSSPSSHQCRGRKTS).

This sequence belongs to the FrhB family. It depends on FAD as a cofactor. Iron-sulfur cluster serves as cofactor.

The protein localises to the plastid. It is found in the chloroplast. The catalysed reaction is chlorophyll a + 2 oxidized [2Fe-2S]-[ferredoxin] + H2O = 7(1)-hydroxychlorophyll a + 2 reduced [2Fe-2S]-[ferredoxin] + 2 H(+). Functionally, probable iron-sulfur flavoprotein that converts 7-hydroxymethyl chlorophyll a to chlorophyll a using ferredoxin as a reducing equivalent. Catalyzes the reduction of a hydroxymethyl group to a methyl group. This Oryza sativa subsp. japonica (Rice) protein is 7-hydroxymethyl chlorophyll a reductase, chloroplastic (HCAR).